Consider the following 197-residue polypeptide: MRVLGVDPGLTRCGLGVVDGALGSRARLVEAGVVRTPAGAEVADRLRAVADGIDAWLDRTRPDAVAVEKVFSQANVRTVMGTAQAGAVAIMLAARRDLPVGLYTPSEVKAAVTGSGRADKAQVGFMVTRLLGLAEVPRPADAADALALALCHLWRGPALARLRAAAPAAPVSRPAPATPARRSPRPAAPARRPAGAS.

Catalysis depends on residues D7, E68, and D141. Residues D7, E68, and D141 each contribute to the Mg(2+) site. Composition is skewed to low complexity over residues 165–181 (AAPAAPVSRPAPATPAR) and 188–197 (APARRPAGAS). A disordered region spans residues 165 to 197 (AAPAAPVSRPAPATPARRSPRPAAPARRPAGAS).

This sequence belongs to the RuvC family. As to quaternary structure, homodimer which binds Holliday junction (HJ) DNA. The HJ becomes 2-fold symmetrical on binding to RuvC with unstacked arms; it has a different conformation from HJ DNA in complex with RuvA. In the full resolvosome a probable DNA-RuvA(4)-RuvB(12)-RuvC(2) complex forms which resolves the HJ. Mg(2+) serves as cofactor.

The protein localises to the cytoplasm. It catalyses the reaction Endonucleolytic cleavage at a junction such as a reciprocal single-stranded crossover between two homologous DNA duplexes (Holliday junction).. In terms of biological role, the RuvA-RuvB-RuvC complex processes Holliday junction (HJ) DNA during genetic recombination and DNA repair. Endonuclease that resolves HJ intermediates. Cleaves cruciform DNA by making single-stranded nicks across the HJ at symmetrical positions within the homologous arms, yielding a 5'-phosphate and a 3'-hydroxyl group; requires a central core of homology in the junction. The consensus cleavage sequence is 5'-(A/T)TT(C/G)-3'. Cleavage occurs on the 3'-side of the TT dinucleotide at the point of strand exchange. HJ branch migration catalyzed by RuvA-RuvB allows RuvC to scan DNA until it finds its consensus sequence, where it cleaves and resolves the cruciform DNA. This chain is Crossover junction endodeoxyribonuclease RuvC, found in Frankia alni (strain DSM 45986 / CECT 9034 / ACN14a).